The primary structure comprises 245 residues: tRNA1(Val) (adenine(37)-N6)-methyltransferase (245 aa).

Belongs to the methyltransferase superfamily. tRNA (adenine-N(6)-)-methyltransferase family.

Its subcellular location is the cytoplasm. The catalysed reaction is adenosine(37) in tRNA1(Val) + S-adenosyl-L-methionine = N(6)-methyladenosine(37) in tRNA1(Val) + S-adenosyl-L-homocysteine + H(+). In terms of biological role, specifically methylates the adenine in position 37 of tRNA(1)(Val) (anticodon cmo5UAC). The protein is tRNA1(Val) (adenine(37)-N6)-methyltransferase of Salmonella enteritidis PT4 (strain P125109).